A 454-amino-acid chain; its full sequence is tRNA(Ile)-lysidine synthase (454 aa).

31–36 (SGGADS) serves as a coordination point for ATP.

It belongs to the tRNA(Ile)-lysidine synthase family.

The protein resides in the cytoplasm. It catalyses the reaction cytidine(34) in tRNA(Ile2) + L-lysine + ATP = lysidine(34) in tRNA(Ile2) + AMP + diphosphate + H(+). In terms of biological role, ligates lysine onto the cytidine present at position 34 of the AUA codon-specific tRNA(Ile) that contains the anticodon CAU, in an ATP-dependent manner. Cytidine is converted to lysidine, thus changing the amino acid specificity of the tRNA from methionine to isoleucine. This Porphyromonas gingivalis (strain ATCC 33277 / DSM 20709 / CIP 103683 / JCM 12257 / NCTC 11834 / 2561) protein is tRNA(Ile)-lysidine synthase.